A 251-amino-acid chain; its full sequence is CCN family member 5 (251 aa).

The signal sequence occupies residues 1-23; it reads MRGNPLIHLLAISFLCILSMVYS. The IGFBP N-terminal domain maps to 24–103; that stretch reads QLCPAPCACP…EEDDGSCEVN (80 aa). Intrachain disulfides connect Cys26/Cys50, Cys30/Cys52, Cys32/Cys53, Cys39/Cys56, Cys64/Cys78, and Cys70/Cys100. The 67-residue stretch at 98-164 folds into the VWFC domain; that stretch reads GSCEVNGRRY…GRCCPEWVCD (67 aa). The TSP type-1 domain maps to 195 to 239; it reads CPNWSTAWGPCSTTCGLGIATRVSNQNRFCQLEIQRRLCLSRPCL. Residue Asn197 is glycosylated (N-linked (GlcNAc...) asparagine).

It belongs to the CCN family.

It is found in the secreted. May play an important role in modulating bone turnover. Promotes the adhesion of osteoblast cells and inhibits the binding of fibrinogen to integrin receptors. In addition, inhibits osteocalcin production. This is CCN family member 5 (Ccn5) from Mus musculus (Mouse).